We begin with the raw amino-acid sequence, 365 residues long: Fructose-1,6-bisphosphate aldolase/phosphatase (365 aa).

Aspartate 11 (proton acceptor; for FBP phosphatase activity) is an active-site residue. Residues aspartate 11, histidine 18, aspartate 52, and aspartate 53 each coordinate Mg(2+). Position 18 (histidine 18) interacts with beta-D-fructose 1,6-bisphosphate. Histidine 18 is a dihydroxyacetone phosphate binding site. Tyrosine 90 contributes to the beta-D-fructose 1,6-bisphosphate binding site. Glutamine 94 contacts Mg(2+). 103 to 104 is a beta-D-fructose 1,6-bisphosphate binding site; the sequence is GN. Aspartate 131 lines the Mg(2+) pocket. A beta-D-fructose 1,6-bisphosphate-binding site is contributed by lysine 132. Residue lysine 132 coordinates dihydroxyacetone phosphate. The active-site Proton donor/acceptor; for FBP aldolase activity is tyrosine 228. Mg(2+) is bound by residues lysine 231, aspartate 232, and aspartate 233. Lysine 231 serves as the catalytic Schiff-base intermediate with DHAP; for FBP aldolase activity. Beta-D-fructose 1,6-bisphosphate-binding positions include 241-242, arginine 265, aspartate 286, and tyrosine 347; that span reads QS. Dihydroxyacetone phosphate-binding residues include arginine 265 and aspartate 286.

Belongs to the FBP aldolase/phosphatase family. As to quaternary structure, homooctamer; dimer of tetramers. Mg(2+) serves as cofactor.

The enzyme catalyses beta-D-fructose 1,6-bisphosphate + H2O = beta-D-fructose 6-phosphate + phosphate. The catalysed reaction is beta-D-fructose 1,6-bisphosphate = D-glyceraldehyde 3-phosphate + dihydroxyacetone phosphate. It participates in carbohydrate biosynthesis; gluconeogenesis. Its function is as follows. Catalyzes two subsequent steps in gluconeogenesis: the aldol condensation of dihydroxyacetone phosphate (DHAP) and glyceraldehyde-3-phosphate (GA3P) to fructose-1,6-bisphosphate (FBP), and the dephosphorylation of FBP to fructose-6-phosphate (F6P). In Methanothermobacter marburgensis (strain ATCC BAA-927 / DSM 2133 / JCM 14651 / NBRC 100331 / OCM 82 / Marburg) (Methanobacterium thermoautotrophicum), this protein is Fructose-1,6-bisphosphate aldolase/phosphatase.